A 698-amino-acid polypeptide reads, in one-letter code: Protein SST2 (698 aa).

The tract at residues 10-203 is fungal-DR; sequence ELSSKNFSRT…GAKPNVWSPT (194 aa). Ser252 carries the phosphoserine modification. Residues 273–358 form the DEP domain; the sequence is SNAGIRLFEN…SRSSFFTLSK (86 aa). Ser408 is subject to Phosphoserine. The region spanning 420–689 is the RGS domain; it reads KLDYVLTDPG…TQSDVYKDAS (270 aa). At Ser539 the chain carries Phosphoserine; by MAPK. Positions 545-586 are disordered; sequence FPTNLYDPSPASAESAASSISSTEADTLGEPPEVSLKPSKNL. The segment covering 551-570 has biased composition (low complexity); sequence DPSPASAESAASSISSTEAD. Residue Ser587 is modified to Phosphoserine.

In terms of processing, phosphorylated by FUS3 and KSS1.

Functionally, desensitization to alpha-factor pheromone. Is involved in regulating the signaling pathway for responding to mating pheromone. This chain is Protein SST2 (SST2), found in Saccharomyces cerevisiae (strain ATCC 204508 / S288c) (Baker's yeast).